Here is a 140-residue protein sequence, read N- to C-terminus: ATP synthase epsilon chain (140 aa).

It belongs to the ATPase epsilon chain family. In terms of assembly, F-type ATPases have 2 components, CF(1) - the catalytic core - and CF(0) - the membrane proton channel. CF(1) has five subunits: alpha(3), beta(3), gamma(1), delta(1), epsilon(1). CF(0) has three main subunits: a, b and c.

It localises to the cell inner membrane. In terms of biological role, produces ATP from ADP in the presence of a proton gradient across the membrane. The polypeptide is ATP synthase epsilon chain (Neisseria gonorrhoeae (strain ATCC 700825 / FA 1090)).